The primary structure comprises 243 residues: Carboxy-S-adenosyl-L-methionine synthase (243 aa).

S-adenosyl-L-methionine is bound by residues Tyr40, 65–67 (GCS), 90–91 (DN), 118–119 (DI), Asn133, and Arg200.

Belongs to the class I-like SAM-binding methyltransferase superfamily. Cx-SAM synthase family. As to quaternary structure, homodimer.

It catalyses the reaction prephenate + S-adenosyl-L-methionine = carboxy-S-adenosyl-L-methionine + 3-phenylpyruvate + H2O. In terms of biological role, catalyzes the conversion of S-adenosyl-L-methionine (SAM) to carboxy-S-adenosyl-L-methionine (Cx-SAM). The chain is Carboxy-S-adenosyl-L-methionine synthase from Shewanella loihica (strain ATCC BAA-1088 / PV-4).